Reading from the N-terminus, the 640-residue chain is SH3 domain-containing protein 21 (640 aa).

The segment at 1–60 (MVQSELQLQPRAGGRAEAASWGDRGNDKGGLGNPDMPSVSPGPQRPPKLSSLAYDSPPDY) is disordered. Residues 65–126 (SHPEVYRVLF…PDNFVLPPPP (62 aa)) enclose the SH3 domain. Disordered stretches follow at residues 133–361 (RKVV…PLGD), 401–551 (YFVA…PDSQ), and 618–640 (VQVM…TQTY). The span at 177 to 186 (PSRDSQKLTS) shows a compositional bias: basic and acidic residues. Polar residues predominate over residues 210–220 (TQTPQQRSVSS). 3 stretches are compositionally biased toward basic and acidic residues: residues 401-416 (YFVA…EAHT), 459-469 (ALEKPHPHEEA), and 494-532 (RPLR…EVPP). Residues 572 to 626 (VDVTSLRGEVESLRRALELMEVQLERKLTDIWEELKSEKEQRRRLEVQVMQGTQK) are a coiled coil. The segment covering 621–640 (MQGTQKSQTPRVIHTQTQTY) has biased composition (polar residues).

This is SH3 domain-containing protein 21 (SH3D21) from Homo sapiens (Human).